The chain runs to 100 residues: Integration host factor subunit beta (100 aa).

Residues 81-100 form a disordered region; the sequence is KPGKELRDRVNEDEHEEAHT. Residues 82 to 100 are compositionally biased toward basic and acidic residues; the sequence is PGKELRDRVNEDEHEEAHT.

This sequence belongs to the bacterial histone-like protein family. In terms of assembly, heterodimer of an alpha and a beta chain.

This protein is one of the two subunits of integration host factor, a specific DNA-binding protein that functions in genetic recombination as well as in transcriptional and translational control. The sequence is that of Integration host factor subunit beta (ihfB) from Pseudomonas putida (Arthrobacter siderocapsulatus).